The primary structure comprises 295 residues: 4-hydroxy-tetrahydrodipicolinate synthase (295 aa).

A pyruvate-binding site is contributed by Thr-47. Tyr-135 acts as the Proton donor/acceptor in catalysis. Lys-163 serves as the catalytic Schiff-base intermediate with substrate. Residue Ile-206 participates in pyruvate binding.

As to quaternary structure, homodimer. In fact, exists in a monomer-dimer equilibrium in solution, shifted in favor of the dimer in presence of the substrate pyruvate; the monomer has significantly reduced activity compared with the dimer.

Its subcellular location is the cytoplasm. It carries out the reaction L-aspartate 4-semialdehyde + pyruvate = (2S,4S)-4-hydroxy-2,3,4,5-tetrahydrodipicolinate + H2O + H(+). The protein operates within amino-acid biosynthesis; L-lysine biosynthesis via DAP pathway; (S)-tetrahydrodipicolinate from L-aspartate: step 3/4. Its activity is regulated as follows. Is insensitive to lysine-feedback inhibition. Shows ASA substrate inhibition. Functionally, catalyzes the condensation of (S)-aspartate-beta-semialdehyde [(S)-ASA] and pyruvate to 4-hydroxy-tetrahydrodipicolinate (HTPA). This chain is 4-hydroxy-tetrahydrodipicolinate synthase, found in Staphylococcus aureus (strain MRSA252).